The primary structure comprises 433 residues: Peptidoglycan glycosyltransferase RodA (433 aa).

12 consecutive transmembrane segments (helical) span residues 9-29 (FDYLLLLTMLALTSIGILFIY), 44-64 (YLKQIVWAVMGVVLMLSVSMY), 74-94 (TLIFAGFILLLIYTRLFGRYV), 100-120 (WIGVGEFGIQISEFAKIAYIL), 158-178 (LGTASVYLPIFLVMCFIAGFP), 181-201 (LIFAVVCVVLLTLLFTLLPLW), 221-241 (LSLFVFFSLSATSAVAVVGYL), 249-269 (YWITYALGMVSISYGASLLGV), 295-315 (WHIIQSMIAIGSGGAFGMGYL), 341-361 (WGFVGGVIVFGLYLLFFLHTL), 378-398 (GVLGMFLFHFVVNVGMTMGIM), and 400-420 (ITGIPLLLLSYGGSSLWTAMI).

Belongs to the SEDS family. MrdB/RodA subfamily.

The protein resides in the cell inner membrane. The enzyme catalyses [GlcNAc-(1-&gt;4)-Mur2Ac(oyl-L-Ala-gamma-D-Glu-L-Lys-D-Ala-D-Ala)](n)-di-trans,octa-cis-undecaprenyl diphosphate + beta-D-GlcNAc-(1-&gt;4)-Mur2Ac(oyl-L-Ala-gamma-D-Glu-L-Lys-D-Ala-D-Ala)-di-trans,octa-cis-undecaprenyl diphosphate = [GlcNAc-(1-&gt;4)-Mur2Ac(oyl-L-Ala-gamma-D-Glu-L-Lys-D-Ala-D-Ala)](n+1)-di-trans,octa-cis-undecaprenyl diphosphate + di-trans,octa-cis-undecaprenyl diphosphate + H(+). It participates in cell wall biogenesis; peptidoglycan biosynthesis. In terms of biological role, peptidoglycan polymerase that is essential for cell wall elongation. In Treponema pallidum (strain Nichols), this protein is Peptidoglycan glycosyltransferase RodA.